A 159-amino-acid chain; its full sequence is Mediator of RNA polymerase II transcription subunit 10 (159 aa).

Positions 54–77 (STHTKPQPPSQDDEQKGSANDPLL) are disordered.

Belongs to the Mediator complex subunit 10 family. Component of the Mediator complex.

It localises to the nucleus. Component of the Mediator complex, a coactivator involved in the regulated transcription of nearly all RNA polymerase II-dependent genes. Mediator functions as a bridge to convey information from gene-specific regulatory proteins to the basal RNA polymerase II transcription machinery. Mediator is recruited to promoters by direct interactions with regulatory proteins and serves as a scaffold for the assembly of a functional preinitiation complex with RNA polymerase II and the general transcription factors. This chain is Mediator of RNA polymerase II transcription subunit 10 (nut2), found in Aspergillus fumigatus (strain ATCC MYA-4609 / CBS 101355 / FGSC A1100 / Af293) (Neosartorya fumigata).